The sequence spans 249 residues: Isoprenyl transferase (249 aa).

Residue aspartate 25 is part of the active site. A Mg(2+)-binding site is contributed by aspartate 25. Residues 26–29 (GNGR), tryptophan 30, arginine 38, histidine 42, and 70–72 (STE) contribute to the substrate site. The Proton acceptor role is filled by asparagine 73. Residues tryptophan 74, arginine 76, arginine 197, and 203 to 205 (RLS) each bind substrate. Glutamate 216 contributes to the Mg(2+) binding site.

Belongs to the UPP synthase family. In terms of assembly, homodimer. The cofactor is Mg(2+).

Functionally, catalyzes the condensation of isopentenyl diphosphate (IPP) with allylic pyrophosphates generating different type of terpenoids. This Streptococcus pyogenes serotype M1 protein is Isoprenyl transferase.